Here is a 370-residue protein sequence, read N- to C-terminus: Polygalacturonase 1 (370 aa).

The N-terminal stretch at 1 to 18 is a signal peptide; it reads MRTSILSMLALGAAAVSA. A disulfide bridge connects residues Cys36 and Cys51. 5 PbH1 repeats span residues 163 to 194, 195 to 216, 217 to 237, 246 to 267, and 275 to 297; these read ADNL…DVGE, STYI…AINS, GENI…SIGS, VKNV…RIKT, and VADV…VIEQ. Asp209 serves as the catalytic Proton donor. Cysteines 211 and 227 form a disulfide. The active site involves His231. N-linked (GlcNAc...) asparagine glycosylation is present at Asn248. Disulfide bonds link Cys337-Cys342 and Cys361-Cys370.

Belongs to the glycosyl hydrolase 28 family.

Its subcellular location is the secreted. The enzyme catalyses (1,4-alpha-D-galacturonosyl)n+m + H2O = (1,4-alpha-D-galacturonosyl)n + (1,4-alpha-D-galacturonosyl)m.. The protein is Polygalacturonase 1 (PG1) of Penicillium olsonii.